The primary structure comprises 197 residues: Adenylate kinase (197 aa).

7-15 (ALPGSGKTT) provides a ligand contact to ATP.

This sequence belongs to the archaeal adenylate kinase family.

It localises to the cytoplasm. It carries out the reaction AMP + ATP = 2 ADP. This Pyrobaculum aerophilum (strain ATCC 51768 / DSM 7523 / JCM 9630 / CIP 104966 / NBRC 100827 / IM2) protein is Adenylate kinase (adkA).